A 201-amino-acid chain; its full sequence is Ribosomal RNA large subunit methyltransferase E (201 aa).

G49, W51, D69, D90, and D113 together coordinate S-adenosyl-L-methionine. K153 (proton acceptor) is an active-site residue.

The protein belongs to the class I-like SAM-binding methyltransferase superfamily. RNA methyltransferase RlmE family.

It is found in the cytoplasm. The catalysed reaction is uridine(2552) in 23S rRNA + S-adenosyl-L-methionine = 2'-O-methyluridine(2552) in 23S rRNA + S-adenosyl-L-homocysteine + H(+). In terms of biological role, specifically methylates the uridine in position 2552 of 23S rRNA at the 2'-O position of the ribose in the fully assembled 50S ribosomal subunit. The sequence is that of Ribosomal RNA large subunit methyltransferase E from Desulfotalea psychrophila (strain LSv54 / DSM 12343).